The primary structure comprises 633 residues: DEAD-box ATP-dependent RNA helicase 37 (633 aa).

Positions 1–110 (MSASWADVAD…WNNRSGGWDR (110 aa)) are disordered. N-acetylserine is present on S2. Over residues 11 to 25 (SENTGSGSSNQNSHP) the composition is skewed to polar residues. 2 stretches are compositionally biased toward gly residues: residues 68 to 80 (GGSGVGVGGGGGY) and 87 to 101 (PGSGSGYGGRGGGGW). Positions 159–187 (NTFAEIDLGEALNLNIRRCKYVKPTPVQR) match the Q motif motif. Residues 190–374 (IPILLEGRDL…ADFLANYIFL (185 aa)) enclose the Helicase ATP-binding domain. 203–210 (AQTGSGKT) contacts ATP. Positions 318 to 321 (DEAD) match the DEAD box motif. Positions 401 to 552 (HLMDLLHAQR…EVPEWLTRYA (152 aa)) constitute a Helicase C-terminal domain. Residues 555–600 (SSFGGGKNRRSGGRFGGRDFRREGSFGSGRGGYGGGGGGYGGGGGY) are disordered. Residues 580 to 600 (FGSGRGGYGGGGGGYGGGGGY) are compositionally biased toward gly residues.

This sequence belongs to the DEAD box helicase family. DDX3/DED1 subfamily.

The catalysed reaction is ATP + H2O = ADP + phosphate + H(+). This chain is DEAD-box ATP-dependent RNA helicase 37 (RH37), found in Arabidopsis thaliana (Mouse-ear cress).